Consider the following 260-residue polypeptide: Acetylglutamate kinase (260 aa).

Substrate contacts are provided by residues 46-47 (GG), arginine 68, and asparagine 160.

This sequence belongs to the acetylglutamate kinase family. ArgB subfamily.

The protein localises to the cytoplasm. It carries out the reaction N-acetyl-L-glutamate + ATP = N-acetyl-L-glutamyl 5-phosphate + ADP. The protein operates within amino-acid biosynthesis; L-arginine biosynthesis; N(2)-acetyl-L-ornithine from L-glutamate: step 2/4. In terms of biological role, catalyzes the ATP-dependent phosphorylation of N-acetyl-L-glutamate. The chain is Acetylglutamate kinase from Shewanella denitrificans (strain OS217 / ATCC BAA-1090 / DSM 15013).